Reading from the N-terminus, the 252-residue chain is MEGHVYWTDDEVWAIRRAYLDGSGAQTLINTKINDPDDIAVNWVARSLYWTHTGTEHIEVTCLNSTSHKILVSEDMDEPRAIALHPEMGLTYWIDWGENPEIKRANLDRQELRVLVNASLGWPNGLALDLQEGKLYWGDAKTDKIEAISVDETKRQTLLKDKLPHIFRFTLLGDFIYWTAWQHHSIKRVHKVKANRDVIIDQLPDLMGLKAVNVDKVVGTNPHADRNGGAATCASSRPTQPGLAAPSRAWNC.

LDL-receptor class B repeat units lie at residues 3–45 (GHVY…NWVA), 46–88 (RSLY…HPEM), 89–132 (GLTY…DLQE), 133–175 (GKLY…LGDF), and 176–218 (IYWT…DKVV). The tract at residues 223–247 (HADRNGGAATCASSRPTQPGLAAPS) is disordered.

The chain is Low-density lipoprotein receptor-related protein 5-like protein (LRP5L) from Homo sapiens (Human).